A 319-amino-acid polypeptide reads, in one-letter code: GTPase Era (319 aa).

The 188-residue stretch at R9–E196 folds into the Era-type G domain. The interval G17–S24 is G1. G17 to S24 contributes to the GTP binding site. The interval Q43–N47 is G2. Positions D64–G67 are G3. GTP is bound by residues D64–Y68 and N127–D130. The interval N127 to D130 is G4. Residues I175–A177 form a G5 region. The 77-residue stretch at C227–V303 folds into the KH type-2 domain.

Belongs to the TRAFAC class TrmE-Era-EngA-EngB-Septin-like GTPase superfamily. Era GTPase family. Monomer.

The protein resides in the cytoplasm. Its subcellular location is the cell inner membrane. An essential GTPase that binds both GDP and GTP, with rapid nucleotide exchange. Plays a role in 16S rRNA processing and 30S ribosomal subunit biogenesis and possibly also in cell cycle regulation and energy metabolism. The polypeptide is GTPase Era (Treponema pallidum (strain Nichols)).